The primary structure comprises 392 residues: 3-ketoacyl-CoA thiolase (392 aa).

The Acyl-thioester intermediate role is filled by Cys95. Active-site proton acceptor residues include His347 and Cys377.

Belongs to the thiolase-like superfamily. Thiolase family. As to quaternary structure, heterotetramer of two alpha chains (FadB) and two beta chains (FadA).

The protein resides in the cytoplasm. The enzyme catalyses an acyl-CoA + acetyl-CoA = a 3-oxoacyl-CoA + CoA. The protein operates within lipid metabolism; fatty acid beta-oxidation. Its function is as follows. Catalyzes the final step of fatty acid oxidation in which acetyl-CoA is released and the CoA ester of a fatty acid two carbons shorter is formed. The sequence is that of 3-ketoacyl-CoA thiolase from Chromohalobacter salexigens (strain ATCC BAA-138 / DSM 3043 / CIP 106854 / NCIMB 13768 / 1H11).